Here is a 99-residue protein sequence, read N- to C-terminus: Large ribosomal subunit protein uL23 (99 aa).

As to quaternary structure, contacts protein L29, and trigger factor when it is bound to the ribosome. Part of the 50S ribosomal subunit.

Its function is as follows. One of the early assembly proteins it binds 23S rRNA. One of the proteins that surrounds the polypeptide exit tunnel on the outside of the ribosome. Forms the main docking site for trigger factor binding to the ribosome. The polypeptide is Large ribosomal subunit protein uL23 (Rhodopseudomonas palustris (strain ATCC BAA-98 / CGA009)).